The sequence spans 116 residues: NADH-ubiquinone oxidoreductase chain 3 (116 aa).

Transmembrane regions (helical) follow at residues 3 to 23 (LISTVILIASALSLILILVSF), 56 to 76 (FFLIAILFLLFDLEIALLLPL), and 87 to 107 (LTFMWATSVLALLTLGLIYEW).

This sequence belongs to the complex I subunit 3 family.

The protein resides in the mitochondrion membrane. The catalysed reaction is a ubiquinone + NADH + 5 H(+)(in) = a ubiquinol + NAD(+) + 4 H(+)(out). Core subunit of the mitochondrial membrane respiratory chain NADH dehydrogenase (Complex I) that is believed to belong to the minimal assembly required for catalysis. Complex I functions in the transfer of electrons from NADH to the respiratory chain. The immediate electron acceptor for the enzyme is believed to be ubiquinone. This chain is NADH-ubiquinone oxidoreductase chain 3 (MT-ND3), found in Gadus morhua (Atlantic cod).